The chain runs to 306 residues: uncharacterized protein (306 aa).

The Proton donor role is filled by Y51. 197–207 (GPVAKGLLTEK) contacts NADP(+).

It belongs to the aldo/keto reductase family. Aldo/keto reductase 2 subfamily.

This is an uncharacterized protein from Bacillus subtilis (strain 168).